The following is a 169-amino-acid chain: Disulfide bond formation protein B (169 aa).

The Cytoplasmic segment spans residues 1 to 8 (MRLSVRWV). The chain crosses the membrane as a helical span at residues 9–25 (FFLGFFLCALMLAIAGY). Residues 26-43 (FQFVENLEPCPLCILSRV) lie on the Periplasmic side of the membrane. Cysteines 35 and 38 form a disulfide. Residues 44–60 (AVLAIGGVFLVAALHNP) form a helical membrane-spanning segment. The Cytoplasmic segment spans residues 61-67 (KSWGIKV). A helical membrane pass occupies residues 68–84 (YALLGFVVTLIGIGITG). At 85–141 (RHVWLQSLPADQVPACGPGLNFMLDNFPLTETLELVFRGSGECAEVQWSFLGLTIPG) the chain is on the periplasmic side. A disulfide bridge connects residues Cys100 and Cys127. A helical transmembrane segment spans residues 142-160 (WTLVAFLFLGVISLWQMGR). Topologically, residues 161-169 (TGGGAGKLT) are cytoplasmic.

It belongs to the DsbB family.

It is found in the cell inner membrane. In terms of biological role, required for disulfide bond formation in some periplasmic proteins. Acts by oxidizing the DsbA protein. This is Disulfide bond formation protein B from Nitrosococcus oceani (strain ATCC 19707 / BCRC 17464 / JCM 30415 / NCIMB 11848 / C-107).